The primary structure comprises 302 residues: Quinolinate synthase (302 aa).

Residues H24 and S41 each coordinate iminosuccinate. [4Fe-4S] cluster is bound at residue C86. Iminosuccinate-binding positions include 112–114 and S129; that span reads YVN. C171 contacts [4Fe-4S] cluster. Iminosuccinate is bound by residues 197-199 and T214; that span reads HPE. Position 259 (C259) interacts with [4Fe-4S] cluster.

The protein belongs to the quinolinate synthase family. Type 2 subfamily. The cofactor is [4Fe-4S] cluster.

The protein resides in the cytoplasm. The catalysed reaction is iminosuccinate + dihydroxyacetone phosphate = quinolinate + phosphate + 2 H2O + H(+). It participates in cofactor biosynthesis; NAD(+) biosynthesis; quinolinate from iminoaspartate: step 1/1. Functionally, catalyzes the condensation of iminoaspartate with dihydroxyacetone phosphate to form quinolinate. The polypeptide is Quinolinate synthase (Dehalococcoides mccartyi (strain ATCC BAA-2100 / JCM 16839 / KCTC 5957 / BAV1)).